A 665-amino-acid polypeptide reads, in one-letter code: Cysteine-rich receptor-like protein kinase 26 (665 aa).

An N-terminal signal peptide occupies residues 1–22; the sequence is MLSLLLPLISLLFQIQCFTVKS. Topologically, residues 23–283 are extracellular; it reads QPVPLNQICS…GDKNRGVPKA (261 aa). Gnk2-homologous domains follow at residues 26-129 and 135-244; these read PLNQ…NRTI and ISPH…PWRF. Residues Asn-33, Asn-37, Asn-67, Asn-126, Asn-146, and Asn-266 are each glycosylated (N-linked (GlcNAc...) asparagine). Residues 251–275 are disordered; that stretch reads DDPSSVPATPSRPPKNETRSVTQGD. Residues 284-304 traverse the membrane as a helical segment; it reads LIFASASVAIVVLFIVLLVVF. Residues 305–665 lie on the Cytoplasmic side of the membrane; it reads LKLRRKENIR…YNSNTELYPR (361 aa). The Protein kinase domain maps to 344–624; the sequence is FSLENKLGEG…VLMLDGHTIA (281 aa). Residues 350 to 358 and Lys-372 each bind ATP; that span reads LGEGGFGAV. Tyr-417 carries the post-translational modification Phosphotyrosine. Residue Asp-469 is the Proton acceptor of the active site. Ser-473 is modified (phosphoserine). Position 510 is a phosphothreonine (Thr-510). Phosphotyrosine is present on Tyr-518. Residues 641–665 form a disordered region; it reads SDSSSSLGHNAKTSNYNSNTELYPR. Residues 647–665 are compositionally biased toward polar residues; the sequence is LGHNAKTSNYNSNTELYPR.

It belongs to the protein kinase superfamily. Ser/Thr protein kinase family. CRK subfamily.

The protein localises to the membrane. The enzyme catalyses L-seryl-[protein] + ATP = O-phospho-L-seryl-[protein] + ADP + H(+). It carries out the reaction L-threonyl-[protein] + ATP = O-phospho-L-threonyl-[protein] + ADP + H(+). This Arabidopsis thaliana (Mouse-ear cress) protein is Cysteine-rich receptor-like protein kinase 26 (CRK26).